Here is a 265-residue protein sequence, read N- to C-terminus: Phosphate import ATP-binding protein PstB (265 aa).

The 243-residue stretch at 18-260 (IAAKGVNVYY…PEDPRTESYI (243 aa)) folds into the ABC transporter domain. 50–57 (GPSGCGKS) is an ATP binding site.

It belongs to the ABC transporter superfamily. Phosphate importer (TC 3.A.1.7) family. As to quaternary structure, the complex is composed of two ATP-binding proteins (PstB), two transmembrane proteins (PstC and PstA) and a solute-binding protein (PstS).

Its subcellular location is the cell inner membrane. The enzyme catalyses phosphate(out) + ATP + H2O = ADP + 2 phosphate(in) + H(+). Functionally, part of the ABC transporter complex PstSACB involved in phosphate import. Responsible for energy coupling to the transport system. The chain is Phosphate import ATP-binding protein PstB from Ruegeria sp. (strain TM1040) (Silicibacter sp.).